Here is a 556-residue protein sequence, read N- to C-terminus: MNSLEQVKGLIKEEIQAAVLKAELATEEQIPNVVLESPKDKTNGDFSTNMAMQLARVAKKAPRMIAEELVANFDKAKASIEKIEIAGPGFINFYMDNSYLTDLIPTIVNAGEAYGETSTGKGEKVQVEFVSANPTGDLHLGHARGAAVGDTLCNLLAKAGYDVSREYYINDAGNQIHNLALSVEARYMQALGLEKEMPEDGYHGADIIAIGKRLAEEFGDRYAKADEKESYEFYREYGLKYELAKLQKDLESFRVKFDVWFSETSLYKNGKIDQALAVLKERDEIFEEDGATWFRSMTYGDDKNRVLIKNDGSYTYLTPDIAYHRDKLERGFDKLINIWGADHHGYIPRMKAAIQALGYDKETLEVEIIQMVQLYQNGEKMKMSKRTGKAVTLRELMEEVGVDAMRYFFAMRSGDSHLDFDMDLAVSKSNENPVYYAQYAHARVCSILRQGEELGLATGGDVNYKLVTSEKEVELLKKLGEFPAVVADAAQKRLPHRITNYAFELAAALHSFYNAEKVLNQDNLELSKARYELMKAVRTTLQNALAIVGVSAPEKM.

A 'HIGH' region motif is present at residues 132–142 (ANPTGDLHLGH).

Belongs to the class-I aminoacyl-tRNA synthetase family. Monomer.

Its subcellular location is the cytoplasm. The catalysed reaction is tRNA(Arg) + L-arginine + ATP = L-arginyl-tRNA(Arg) + AMP + diphosphate. The protein is Arginine--tRNA ligase of Bacillus cereus (strain ATCC 10987 / NRS 248).